Consider the following 629-residue polypeptide: UvrABC system protein C (629 aa).

Residues 12–91 form the GIY-YIG domain; sequence DRPGCYLFKD…IKKHKPKYNI (80 aa). Positions 200-235 constitute a UVR domain; sequence QEVLERLRARMEQAAERLEFERAAELRDQIRAIEKV.

This sequence belongs to the UvrC family. As to quaternary structure, interacts with UvrB in an incision complex.

It is found in the cytoplasm. Its function is as follows. The UvrABC repair system catalyzes the recognition and processing of DNA lesions. UvrC both incises the 5' and 3' sides of the lesion. The N-terminal half is responsible for the 3' incision and the C-terminal half is responsible for the 5' incision. The polypeptide is UvrABC system protein C (Symbiobacterium thermophilum (strain DSM 24528 / JCM 14929 / IAM 14863 / T)).